A 104-amino-acid chain; its full sequence is Protein E7 (104 aa).

The interval 1–49 (MRGNAPTLKDIILYDLPTCDPTTCDTPPVDLYCYEQFDTSDEDDEDDDQ) is E7 terminal domain. Residues 31-35 (LYCYE) carry the LXCXE motif; interaction with host RB1 and TMEM173/STING motif. A zinc finger lies at 64–100 (CTQCGRSVKLVVSSTGADIQQLHQMLLDTLGIVCPLC). Positions 82–90 (IQQLHQMLL) match the Nuclear export signal motif.

This sequence belongs to the papillomaviridae E7 protein family. As to quaternary structure, homodimer. Homooligomer. Interacts with host RB1; this interaction induces dissociation of RB1-E2F1 complex thereby disrupting RB1 activity. Interacts with host EP300; this interaction represses EP300 transcriptional activity. Interacts with protein E2; this interaction inhibits E7 oncogenic activity. Interacts with host TMEM173/STING; this interaction impairs the ability of TMEM173/STING to sense cytosolic DNA and promote the production of type I interferon (IFN-alpha and IFN-beta). Highly phosphorylated.

Its subcellular location is the host cytoplasm. The protein localises to the host nucleus. Functionally, plays a role in viral genome replication by driving entry of quiescent cells into the cell cycle. Stimulation of progression from G1 to S phase allows the virus to efficiently use the cellular DNA replicating machinery to achieve viral genome replication. E7 protein has both transforming and trans-activating activities. Induces the disassembly of the E2F1 transcription factor from RB1, with subsequent transcriptional activation of E2F1-regulated S-phase genes. Interferes with host histone deacetylation mediated by HDAC1 and HDAC2, leading to transcription activation. Also plays a role in the inhibition of both antiviral and antiproliferative functions of host interferon alpha. Interaction with host TMEM173/STING impairs the ability of TMEM173/STING to sense cytosolic DNA and promote the production of type I interferon (IFN-alpha and IFN-beta). The protein is Protein E7 of Homo sapiens (Human).